The following is a 360-amino-acid chain: Glycerol-3-phosphate dehydrogenase [NAD(+)], cytoplasmic (360 aa).

NAD(+)-binding positions include 11-16 (GSGNWG), F98, K121, and A155. Residue K121 coordinates substrate. K206 (proton acceptor) is an active-site residue. 2 residues coordinate NAD(+): R270 and Q299. 270 to 271 (RN) is a substrate binding site.

Belongs to the NAD-dependent glycerol-3-phosphate dehydrogenase family. As to quaternary structure, homodimer.

The protein localises to the cytoplasm. It catalyses the reaction sn-glycerol 3-phosphate + NAD(+) = dihydroxyacetone phosphate + NADH + H(+). The protein operates within phospholipid metabolism; alpha-glycerophosphate cycle. The protein is Glycerol-3-phosphate dehydrogenase [NAD(+)], cytoplasmic (Gpdh1) of Drosophila kanekoi (Fruit fly).